The chain runs to 156 residues: ATP synthase subunit b (156 aa).

The chain crosses the membrane as a helical span at residues 4-26 (GATFWGPMISFALFVWFTMKFVW).

It belongs to the ATPase B chain family. As to quaternary structure, F-type ATPases have 2 components, F(1) - the catalytic core - and F(0) - the membrane proton channel. F(1) has five subunits: alpha(3), beta(3), gamma(1), delta(1), epsilon(1). F(0) has three main subunits: a(1), b(2) and c(10-14). The alpha and beta chains form an alternating ring which encloses part of the gamma chain. F(1) is attached to F(0) by a central stalk formed by the gamma and epsilon chains, while a peripheral stalk is formed by the delta and b chains.

The protein localises to the cell inner membrane. F(1)F(0) ATP synthase produces ATP from ADP in the presence of a proton or sodium gradient. F-type ATPases consist of two structural domains, F(1) containing the extramembraneous catalytic core and F(0) containing the membrane proton channel, linked together by a central stalk and a peripheral stalk. During catalysis, ATP synthesis in the catalytic domain of F(1) is coupled via a rotary mechanism of the central stalk subunits to proton translocation. In terms of biological role, component of the F(0) channel, it forms part of the peripheral stalk, linking F(1) to F(0). The chain is ATP synthase subunit b from Halorhodospira halophila (strain DSM 244 / SL1) (Ectothiorhodospira halophila (strain DSM 244 / SL1)).